The primary structure comprises 657 residues: tRNA 5-methylaminomethyl-2-thiouridine biosynthesis bifunctional protein MnmC (657 aa).

Residues 1–238 (MPASTLLQHA…KWEVMSGEYT (238 aa)) are tRNA (mnm(5)s(2)U34)-methyltransferase. The tract at residues 265-657 (IGAGLAGSAS…FGLRRLIRGK (393 aa)) is FAD-dependent cmnm(5)s(2)U34 oxidoreductase.

This sequence in the N-terminal section; belongs to the methyltransferase superfamily. tRNA (mnm(5)s(2)U34)-methyltransferase family. In the C-terminal section; belongs to the DAO family. The cofactor is FAD.

Its subcellular location is the cytoplasm. The enzyme catalyses 5-aminomethyl-2-thiouridine(34) in tRNA + S-adenosyl-L-methionine = 5-methylaminomethyl-2-thiouridine(34) in tRNA + S-adenosyl-L-homocysteine + H(+). Functionally, catalyzes the last two steps in the biosynthesis of 5-methylaminomethyl-2-thiouridine (mnm(5)s(2)U) at the wobble position (U34) in tRNA. Catalyzes the FAD-dependent demodification of cmnm(5)s(2)U34 to nm(5)s(2)U34, followed by the transfer of a methyl group from S-adenosyl-L-methionine to nm(5)s(2)U34, to form mnm(5)s(2)U34. This Pseudomonas putida (strain W619) protein is tRNA 5-methylaminomethyl-2-thiouridine biosynthesis bifunctional protein MnmC.